We begin with the raw amino-acid sequence, 335 residues long: Zinc finger protein 396 (335 aa).

Residues 52–134 (RQQFRQFGYQ…TMLEDVEREL (83 aa)) form the SCAN box domain. C2H2-type zinc fingers lie at residues 251 to 273 (QKCDECGKIFSQSSALILHQRIH), 279 to 301 (YACDECAKAFSRSAILIQHRRTH), and 307 to 329 (YKCHDCGKAFSQSSNLFRHRKRH).

Belongs to the krueppel C2H2-type zinc-finger protein family. As to quaternary structure, isoforms 1 and 2 can both homo- and hetero-associate. Expressed strongly in liver, moderately in skeletal muscle and weakly in kidney, pancreas, spleen and prostate.

The protein resides in the nucleus. Its subcellular location is the cytoplasm. Its function is as follows. Isoform 1 and isoform 2 act as DNA-dependent transcriptional repressors. This is Zinc finger protein 396 (ZNF396) from Homo sapiens (Human).